The chain runs to 702 residues: Ribosomal RNA large subunit methyltransferase K/L (702 aa).

The 112-residue stretch at 43-154 folds into the THUMP domain; that stretch reads LIYQSLMWSR…KETASIALDL (112 aa).

It belongs to the methyltransferase superfamily. RlmKL family.

The protein localises to the cytoplasm. It carries out the reaction guanosine(2445) in 23S rRNA + S-adenosyl-L-methionine = N(2)-methylguanosine(2445) in 23S rRNA + S-adenosyl-L-homocysteine + H(+). It catalyses the reaction guanosine(2069) in 23S rRNA + S-adenosyl-L-methionine = N(2)-methylguanosine(2069) in 23S rRNA + S-adenosyl-L-homocysteine + H(+). Functionally, specifically methylates the guanine in position 2445 (m2G2445) and the guanine in position 2069 (m7G2069) of 23S rRNA. This Salmonella typhi protein is Ribosomal RNA large subunit methyltransferase K/L.